The chain runs to 1517 residues: DNA-directed RNA polymerase subunit beta' (1517 aa).

Zn(2+) is bound by residues C71, C73, C86, and C89. The Mg(2+) site is built by D482, D484, and D486. 4 residues coordinate Zn(2+): C812, C886, C893, and C896.

This sequence belongs to the RNA polymerase beta' chain family. As to quaternary structure, the RNAP catalytic core consists of 2 alpha, 1 beta, 1 beta' and 1 omega subunit. When a sigma factor is associated with the core the holoenzyme is formed, which can initiate transcription. It depends on Mg(2+) as a cofactor. Zn(2+) is required as a cofactor.

It carries out the reaction RNA(n) + a ribonucleoside 5'-triphosphate = RNA(n+1) + diphosphate. In terms of biological role, DNA-dependent RNA polymerase catalyzes the transcription of DNA into RNA using the four ribonucleoside triphosphates as substrates. In Campylobacter jejuni (strain RM1221), this protein is DNA-directed RNA polymerase subunit beta'.